A 90-amino-acid chain; its full sequence is Small ribosomal subunit protein bS18 (90 aa).

This sequence belongs to the bacterial ribosomal protein bS18 family. In terms of assembly, part of the 30S ribosomal subunit. Forms a tight heterodimer with protein bS6.

Its function is as follows. Binds as a heterodimer with protein bS6 to the central domain of the 16S rRNA, where it helps stabilize the platform of the 30S subunit. The chain is Small ribosomal subunit protein bS18 from Bordetella avium (strain 197N).